A 229-amino-acid chain; its full sequence is MAKKSKQMRAALEKIDSTKAYSVEEAVALAQETNFAKFDATVEVSYNLNIDVKKADQQIRGAMVLPNGTGKTQRVLVFARGAKAEEAKAAGADFVGEDELVDKINGGWLDFDVVVATPDMMAIVGRLGRVLGPRNLMPNPKTGTVTMDVAKAVEESKGGKITYRADKAGNVQAIIGKVSFEAEKLVENFKAFNDAIQKAKPATAKGVYITNLSITTTQGPGIKVDPNSL.

The protein belongs to the universal ribosomal protein uL1 family. In terms of assembly, part of the 50S ribosomal subunit.

Functionally, binds directly to 23S rRNA. The L1 stalk is quite mobile in the ribosome, and is involved in E site tRNA release. In terms of biological role, protein L1 is also a translational repressor protein, it controls the translation of the L11 operon by binding to its mRNA. In Streptococcus thermophilus (strain CNRZ 1066), this protein is Large ribosomal subunit protein uL1.